The following is a 1036-amino-acid chain: Protein smoothened (1036 aa).

The first 31 residues, 1–31, serve as a signal peptide directing secretion; the sequence is MQYLNFPRMPNIMMFLEVAILCLWVVADASA. Topologically, residues 32-258 are extracellular; it reads SSAKFGSTTP…DDEHRQIHKL (227 aa). Residues asparagine 55 and asparagine 95 are each glycosylated (N-linked (GlcNAc...) asparagine). An FZ domain is found at 85-206; the sequence is VRRARCYPTS…TLFPTKCTNG (122 aa). 4 disulfide bridges follow: cysteine 90-cysteine 155, cysteine 100-cysteine 148, cysteine 139-cysteine 179, and cysteine 172-cysteine 194. 3 N-linked (GlcNAc...) asparagine glycosylation sites follow: asparagine 184, asparagine 195, and asparagine 213. 2 cysteine pairs are disulfide-bonded: cysteine 218–cysteine 238 and cysteine 242–cysteine 320. Residues 259–279 form a helical membrane-spanning segment; sequence IGWAGSICLLSNLFVVSTFFI. Residues 280–287 lie on the Cytoplasmic side of the membrane; that stretch reads DWKNANKY. Residues 288-308 traverse the membrane as a helical segment; it reads PAVIVFYINLCFLIACVGWLL. Residues 309–339 lie on the Extracellular side of the membrane; that stretch reads QFTSGSREDIVCRKDGTLRHSEPTAGENLSC. A glycan (N-linked (GlcNAc...) asparagine) is linked at asparagine 336. Cysteines 339 and 413 form a disulfide. Residues 340–360 form a helical membrane-spanning segment; the sequence is IVIFVLVYYFLTAGMVWFVFL. The Cytoplasmic segment spans residues 361 to 381; that stretch reads TYAWHWRAMGHVQDRIDKKGS. The helical transmembrane segment at 382-402 threads the bilayer; the sequence is YFHLVAWSLPLVLTITTMAFS. Over 403 to 421 the chain is Extracellular; the sequence is EVDGNSIVGICFVGYINHS. N-linked (GlcNAc...) asparagine glycosylation is present at asparagine 419. A helical membrane pass occupies residues 422–442; it reads MRAGLLLGPLCGVILIGGYFI. Residues 443–469 lie on the Cytoplasmic side of the membrane; the sequence is TRGMVMLFGLKHFANDIKSTSASNKIH. Residues 470-490 form a helical membrane-spanning segment; sequence LIIMRMGVCALLTLVFILVAI. At 491–532 the chain is on the extracellular side; sequence ACHVTEFRHADEWAQSFRQFIICKISSVFEEKSSCRIENRPS. Residues cysteine 513 and cysteine 525 are joined by a disulfide bond. The helical transmembrane segment at 533 to 553 threads the bilayer; it reads VGVLQLHLLCLFSSGIVMSTW. The Cytoplasmic portion of the chain corresponds to 554 to 1036; that stretch reads CWTPSSIETW…KLKMLLLPSK (483 aa). Phosphoserine occurs at positions 658, 659, 667, 670, 673, 687, 690, and 693. Disordered regions lie at residues 678–745 and 870–902; these read HVSV…TSVE and IKKS…KNPA. The span at 880 to 899 shows a compositional bias: basic residues; that stretch reads RHSRNSARSQSKKSQKRHLK.

It belongs to the G-protein coupled receptor Fz/Smo family. In terms of assembly, interacts with cos. In terms of processing, phosphorylation by CkIalpha and PKA regulates smo accumulation at the cell surface and its signaling activity in response to hh. As to expression, expressed in olfactory sensory neurons (at protein level).

The protein resides in the cell membrane. The protein localises to the cell projection. It is found in the cilium. Its function is as follows. Segment polarity protein required for correct patterning of every segment. G protein-coupled receptor which associates with the patched protein (ptc) to transduce the hedgehog (hh) signal through the activation of an inhibitory G-protein. In the absence of hh, ptc represses the constitutive signaling activity of smo through fused (fu). Essential component of a hh-signaling pathway which regulates the Duox-dependent gut immune response to bacterial uracil; required to activate Cad99C-dependent endosome formation, norpA-dependent Ca2+ mobilization and p38 MAPK, which are essential steps in the Duox-dependent production of reactive oxygen species (ROS) in response to intestinal bacterial infection. This is Protein smoothened (smo) from Drosophila melanogaster (Fruit fly).